A 197-amino-acid polypeptide reads, in one-letter code: ATP-dependent Clp protease proteolytic subunit (197 aa).

The active-site Nucleophile is serine 98. Histidine 123 is an active-site residue.

The protein belongs to the peptidase S14 family. In terms of assembly, fourteen ClpP subunits assemble into 2 heptameric rings which stack back to back to give a disk-like structure with a central cavity, resembling the structure of eukaryotic proteasomes.

The protein localises to the cytoplasm. The enzyme catalyses Hydrolysis of proteins to small peptides in the presence of ATP and magnesium. alpha-casein is the usual test substrate. In the absence of ATP, only oligopeptides shorter than five residues are hydrolyzed (such as succinyl-Leu-Tyr-|-NHMec, and Leu-Tyr-Leu-|-Tyr-Trp, in which cleavage of the -Tyr-|-Leu- and -Tyr-|-Trp bonds also occurs).. Cleaves peptides in various proteins in a process that requires ATP hydrolysis. Has a chymotrypsin-like activity. Plays a major role in the degradation of misfolded proteins. In Enterococcus faecalis (strain ATCC 700802 / V583), this protein is ATP-dependent Clp protease proteolytic subunit.